A 101-amino-acid polypeptide reads, in one-letter code: uncharacterized protein (101 aa).

This is an uncharacterized protein from Saccharolobus islandicus (Sulfolobus islandicus).